The primary structure comprises 270 residues: Orotidine 5'-phosphate decarboxylase (270 aa).

Residues aspartate 39, 61–63, 93–102, tyrosine 221, and arginine 239 contribute to the substrate site; these read KTH and DRKFADIGNT. Lysine 95 serves as the catalytic Proton donor.

It belongs to the OMP decarboxylase family.

It catalyses the reaction orotidine 5'-phosphate + H(+) = UMP + CO2. Its pathway is pyrimidine metabolism; UMP biosynthesis via de novo pathway; UMP from orotate: step 2/2. The sequence is that of Orotidine 5'-phosphate decarboxylase (URA3) from Candida albicans (strain SC5314 / ATCC MYA-2876) (Yeast).